A 1638-amino-acid polypeptide reads, in one-letter code: Ciliary rootlet coiled-coil protein 2 (1638 aa).

A compositionally biased stretch (polar residues) spans Met1 to Gly20. Disordered stretches follow at residues Met1 to Leu21, Arg39 to Ser92, Ala396 to His423, and Thr1168 to Glu1213. Residues Ser67–Pro82 show a composition bias toward low complexity. Positions Thr85–Glu144 form a coiled coil. A compositionally biased stretch (polar residues) spans Ser406 to Ser421. Coiled coils occupy residues Leu426 to Glu1234 and Leu1281 to Ala1315. Over residues Arg1180–Val1193 the composition is skewed to basic and acidic residues. 2 disordered regions span residues Arg1338–Asp1383 and Ala1506–Ser1551. Positions Ser1349–Tyr1371 are enriched in polar residues. Coiled-coil stretches lie at residues Arg1412–Ala1506 and Arg1542–Glu1576.

It belongs to the rootletin family.

The chain is Ciliary rootlet coiled-coil protein 2 from Mus musculus (Mouse).